The sequence spans 633 residues: RpoH suppressor (633 aa).

The 400-residue stretch at 11 to 410 folds into the PNPLA domain; sequence LVMKGGITSG…SSNFPIHLFD (400 aa). The next 3 helical transmembrane spans lie at 38 to 58, 133 to 153, and 159 to 179; these read NIGG…AAVG, IAPV…YAVG, and IAAA…FAVL. Residues 41-45 carry the GXSXG motif; sequence GTSAG. The active-site Nucleophile is the S43. The disordered stretch occupies residues 342-380; the sequence is ARRESLPGSDGENEAEDTTSDEDEQKTVLDSTEALTTGG. Acidic residues predominate over residues 352 to 365; that stretch reads GENEAEDTTSDEDE. Catalysis depends on D397, which acts as the Proton acceptor. The short motif at 397-399 is the DGA/G element; the sequence is DGG. A disordered region spans residues 605 to 624; sequence EGEKWSGEGPDLTKTAPRPL.

The protein localises to the cell membrane. Functionally, this protein is non-essential for R.meliloti growth, but induces a heat-shock response in temperature-sensitive E.coli K165 by elevating levels of sigma 32 (mechanism unknown). The sequence is that of RpoH suppressor (suhR) from Rhizobium meliloti (strain 1021) (Ensifer meliloti).